Consider the following 180-residue polypeptide: Large ribosomal subunit protein uL6 (180 aa).

Belongs to the universal ribosomal protein uL6 family. As to quaternary structure, part of the 50S ribosomal subunit.

In terms of biological role, this protein binds to the 23S rRNA, and is important in its secondary structure. It is located near the subunit interface in the base of the L7/L12 stalk, and near the tRNA binding site of the peptidyltransferase center. This Clostridium botulinum (strain 657 / Type Ba4) protein is Large ribosomal subunit protein uL6.